The primary structure comprises 121 residues: Basic phospholipase A2 homolog textilotoxin B chain (121 aa).

7 cysteine pairs are disulfide-bonded: Cys11–Cys72, Cys27–Cys120, Cys29–Cys45, Cys44–Cys101, Cys51–Cys94, Cys61–Cys87, and Cys80–Cys92.

The protein belongs to the phospholipase A2 family. Group I subfamily. N49 sub-subfamily. As to quaternary structure, heterohexamer. 2 forms exist: 2 A or 2 B chains, 2 C chains and 2 covalently-linked D chains, and 1 A or 1 B, 1 C, 2 covalently-linked D chains and 2 differentially glycosylated covalently-linked D chains. Textilotoxin was originally described as pentameric. In terms of tissue distribution, expressed by the venom gland.

It is found in the secreted. Functionally, snake venom oligomeric phospholipase A2 that has potent presynaptic neurotoxicity. Chain B is not itself neurotoxic, but it is essential for the neurotoxicity of textilotoxin. Subunit B possesses a very low phospholipase activity. In Pseudonaja textilis (Eastern brown snake), this protein is Basic phospholipase A2 homolog textilotoxin B chain.